A 95-amino-acid chain; its full sequence is Co-chaperonin GroES (95 aa).

The protein belongs to the GroES chaperonin family. In terms of assembly, heptamer of 7 subunits arranged in a ring. Interacts with the chaperonin GroEL.

It is found in the cytoplasm. Functionally, together with the chaperonin GroEL, plays an essential role in assisting protein folding. The GroEL-GroES system forms a nano-cage that allows encapsulation of the non-native substrate proteins and provides a physical environment optimized to promote and accelerate protein folding. GroES binds to the apical surface of the GroEL ring, thereby capping the opening of the GroEL channel. The sequence is that of Co-chaperonin GroES from Glaesserella parasuis serovar 5 (strain SH0165) (Haemophilus parasuis).